The following is a 449-amino-acid chain: Glutamyl-tRNA reductase (449 aa).

Substrate contacts are provided by residues 58–61 (TCNR), Ser121, 126–128 (ETQ), and Gln132. The active-site Nucleophile is Cys59. An NADP(+)-binding site is contributed by 203 to 208 (GLGEMA).

This sequence belongs to the glutamyl-tRNA reductase family. Homodimer.

The enzyme catalyses (S)-4-amino-5-oxopentanoate + tRNA(Glu) + NADP(+) = L-glutamyl-tRNA(Glu) + NADPH + H(+). It functions in the pathway porphyrin-containing compound metabolism; protoporphyrin-IX biosynthesis; 5-aminolevulinate from L-glutamyl-tRNA(Glu): step 1/2. Functionally, catalyzes the NADPH-dependent reduction of glutamyl-tRNA(Glu) to glutamate 1-semialdehyde (GSA). The chain is Glutamyl-tRNA reductase from Helicobacter pylori (strain G27).